Consider the following 263-residue polypeptide: Glutathione S-transferase F8, chloroplastic (263 aa).

The transit peptide at 1–49 directs the protein to the chloroplast; it reads MGAIQARLPLFLSPPSIKHHTFLHSSSSNSNFKIRSNKSSSSSSSSIIM. The GST N-terminal domain maps to 50 to 131; it reads ASIKVHGVPM…YLAEEYSEKG (82 aa). Glutathione contacts are provided by residues 60 to 61, 89 to 90, 102 to 103, and 115 to 116; these read ST, HK, QI, and ES. In terms of domain architecture, GST C-terminal spans 139 to 263; the sequence is CKKVKATTNV…WAKVIDLQKQ (125 aa). The residue at position 177 (Thr177) is a Phosphothreonine.

It belongs to the GST superfamily. Phi family. As to expression, isoform 1 is predominantly expressed in leaves and isoform 2 in roots.

Its subcellular location is the plastid. The protein resides in the chloroplast. The protein localises to the cytoplasm. It is found in the cytosol. It catalyses the reaction RX + glutathione = an S-substituted glutathione + a halide anion + H(+). Its function is as follows. In vitro, possesses glutathione S-transferase activity toward 1-chloro-2,4-dinitrobenzene (CDNB) and glutathione peroxidase activity toward cumene hydroperoxide and linoleic acid-13-hydroperoxide. May be involved in the conjugation of reduced glutathione to a wide number of exogenous and endogenous hydrophobic electrophiles and have a detoxification role against certain herbicides. In Arabidopsis thaliana (Mouse-ear cress), this protein is Glutathione S-transferase F8, chloroplastic (GSTF8).